We begin with the raw amino-acid sequence, 207 residues long: Guanylate kinase (207 aa).

Residues 4–184 enclose the Guanylate kinase-like domain; that stretch reads GTLYIVSAPS…ALTDLKTIIR (181 aa). 11–18 contributes to the ATP binding site; that stretch reads APSGAGKS.

The protein belongs to the guanylate kinase family.

The protein localises to the cytoplasm. It carries out the reaction GMP + ATP = GDP + ADP. In terms of biological role, essential for recycling GMP and indirectly, cGMP. The chain is Guanylate kinase from Escherichia coli O6:K15:H31 (strain 536 / UPEC).